Here is a 399-residue protein sequence, read N- to C-terminus: Tetracycline resistance protein, class A (399 aa).

A run of 12 helical transmembrane segments spans residues 7-29 (LIVI…PVLP), 44-66 (HYGI…LGAL), 73-95 (RPVL…TAPF), 99-121 (LYIG…AYIA), 133-155 (FGFM…GLMG), 160-182 (HAPF…FLLP), 203-225 (FRWA…MQLV), 245-267 (ATTI…AMIT), 279-298 (ALML…AFAT), 302-324 (MAFP…QAML), 336-358 (LQGS…FTAI), and 368-390 (GWAW…RGLW).

The protein belongs to the major facilitator superfamily. TCR/Tet family.

It localises to the cell inner membrane. Its function is as follows. Resistance to tetracycline by an active tetracycline efflux. This is an energy-dependent process that decreases the accumulation of the antibiotic in whole cells. This protein functions as a metal-tetracycline/H(+) antiporter. This is Tetracycline resistance protein, class A (tetA) from Escherichia coli.